Reading from the N-terminus, the 241-residue chain is Glucosamine-6-phosphate deaminase (241 aa).

Aspartate 67 functions as the Proton acceptor; for enolization step in the catalytic mechanism. The For ring-opening step role is filled by asparagine 136. Residue histidine 138 is the Proton acceptor; for ring-opening step of the active site. The For ring-opening step role is filled by glutamate 143.

This sequence belongs to the glucosamine/galactosamine-6-phosphate isomerase family. NagB subfamily.

The enzyme catalyses alpha-D-glucosamine 6-phosphate + H2O = beta-D-fructose 6-phosphate + NH4(+). Its pathway is amino-sugar metabolism; N-acetylneuraminate degradation; D-fructose 6-phosphate from N-acetylneuraminate: step 5/5. Catalyzes the reversible isomerization-deamination of glucosamine 6-phosphate (GlcN6P) to form fructose 6-phosphate (Fru6P) and ammonium ion. This chain is Glucosamine-6-phosphate deaminase, found in Bacillus velezensis (strain DSM 23117 / BGSC 10A6 / LMG 26770 / FZB42) (Bacillus amyloliquefaciens subsp. plantarum).